The primary structure comprises 743 residues: Catalase-peroxidase (743 aa).

Residues 1–29 (MNAESGENAGGGCPLGHGAGAPRKRPSNR) are disordered. The span at 8-19 (NAGGGCPLGHGA) shows a compositional bias: gly residues. Positions 100–222 (WHSAGTYRIT…LGAVQMGLIY (123 aa)) form a cross-link, tryptophyl-tyrosyl-methioninium (Trp-Tyr) (with M-248). His-101 (proton acceptor) is an active-site residue. Positions 222–248 (YVNPEGPNGNPDPKAAAVDIRETFARM) form a cross-link, tryptophyl-tyrosyl-methioninium (Tyr-Met) (with W-100). His-263 is a heme b binding site.

It belongs to the peroxidase family. Peroxidase/catalase subfamily. As to quaternary structure, homodimer or homotetramer. Heme b serves as cofactor. In terms of processing, formation of the three residue Trp-Tyr-Met cross-link is important for the catalase, but not the peroxidase activity of the enzyme.

It carries out the reaction H2O2 + AH2 = A + 2 H2O. The catalysed reaction is 2 H2O2 = O2 + 2 H2O. Its function is as follows. Bifunctional enzyme with both catalase and broad-spectrum peroxidase activity. The protein is Catalase-peroxidase of Stutzerimonas stutzeri (strain A1501) (Pseudomonas stutzeri).